The primary structure comprises 476 residues: Serine--tRNA ligase (476 aa).

L-serine is bound at residue 280 to 282 (TAE). 311–313 (RAE) is an ATP binding site. E334 is a binding site for L-serine. An ATP-binding site is contributed by 401-404 (EISS). L-serine is bound at residue S436.

It belongs to the class-II aminoacyl-tRNA synthetase family. Type-1 seryl-tRNA synthetase subfamily. Homodimer. The tRNA molecule binds across the dimer.

It is found in the cytoplasm. It carries out the reaction tRNA(Ser) + L-serine + ATP = L-seryl-tRNA(Ser) + AMP + diphosphate + H(+). The catalysed reaction is tRNA(Sec) + L-serine + ATP = L-seryl-tRNA(Sec) + AMP + diphosphate + H(+). The protein operates within aminoacyl-tRNA biosynthesis; selenocysteinyl-tRNA(Sec) biosynthesis; L-seryl-tRNA(Sec) from L-serine and tRNA(Sec): step 1/1. Its function is as follows. Catalyzes the attachment of serine to tRNA(Ser). Is also able to aminoacylate tRNA(Sec) with serine, to form the misacylated tRNA L-seryl-tRNA(Sec), which will be further converted into selenocysteinyl-tRNA(Sec). This Rhodopseudomonas palustris (strain HaA2) protein is Serine--tRNA ligase.